Here is a 458-residue protein sequence, read N- to C-terminus: ATP synthase subunit beta (458 aa).

148–155 (GGAGVGKT) is an ATP binding site.

This sequence belongs to the ATPase alpha/beta chains family. In terms of assembly, F-type ATPases have 2 components, CF(1) - the catalytic core - and CF(0) - the membrane proton channel. CF(1) has five subunits: alpha(3), beta(3), gamma(1), delta(1), epsilon(1). CF(0) has three main subunits: a(1), b(2) and c(9-12). The alpha and beta chains form an alternating ring which encloses part of the gamma chain. CF(1) is attached to CF(0) by a central stalk formed by the gamma and epsilon chains, while a peripheral stalk is formed by the delta and b chains.

The protein resides in the cell inner membrane. It carries out the reaction ATP + H2O + 4 H(+)(in) = ADP + phosphate + 5 H(+)(out). Its function is as follows. Produces ATP from ADP in the presence of a proton gradient across the membrane. The catalytic sites are hosted primarily by the beta subunits. The protein is ATP synthase subunit beta of Pseudomonas putida (strain GB-1).